We begin with the raw amino-acid sequence, 130 residues long: Phosphoribosyl-AMP cyclohydrolase (130 aa).

Aspartate 77 lines the Mg(2+) pocket. Cysteine 78 is a binding site for Zn(2+). Mg(2+) is bound by residues aspartate 79 and aspartate 81. Zn(2+)-binding residues include cysteine 95 and cysteine 102.

Belongs to the PRA-CH family. Homodimer. It depends on Mg(2+) as a cofactor. The cofactor is Zn(2+).

It localises to the cytoplasm. The catalysed reaction is 1-(5-phospho-beta-D-ribosyl)-5'-AMP + H2O = 1-(5-phospho-beta-D-ribosyl)-5-[(5-phospho-beta-D-ribosylamino)methylideneamino]imidazole-4-carboxamide. The protein operates within amino-acid biosynthesis; L-histidine biosynthesis; L-histidine from 5-phospho-alpha-D-ribose 1-diphosphate: step 3/9. Functionally, catalyzes the hydrolysis of the adenine ring of phosphoribosyl-AMP. The protein is Phosphoribosyl-AMP cyclohydrolase of Pseudomonas savastanoi pv. phaseolicola (strain 1448A / Race 6) (Pseudomonas syringae pv. phaseolicola (strain 1448A / Race 6)).